The sequence spans 393 residues: Formate-dependent phosphoribosylglycinamide formyltransferase (393 aa).

N(1)-(5-phospho-beta-D-ribosyl)glycinamide-binding positions include 22 to 23 and Glu-82; that span reads EL. Residues Arg-114, Lys-155, 160–165, 195–198, and Glu-203 each bind ATP; these read SSGKGQ and EGFV. In terms of domain architecture, ATP-grasp spans 119 to 308; the sequence is RLAAEELGLP…EFALHVRAFT (190 aa). Residues Glu-267 and Glu-279 each contribute to the Mg(2+) site. Residues Asp-286, Lys-356, and 363–364 each bind N(1)-(5-phospho-beta-D-ribosyl)glycinamide; that span reads RR.

The protein belongs to the PurK/PurT family. Homodimer.

The enzyme catalyses N(1)-(5-phospho-beta-D-ribosyl)glycinamide + formate + ATP = N(2)-formyl-N(1)-(5-phospho-beta-D-ribosyl)glycinamide + ADP + phosphate + H(+). The protein operates within purine metabolism; IMP biosynthesis via de novo pathway; N(2)-formyl-N(1)-(5-phospho-D-ribosyl)glycinamide from N(1)-(5-phospho-D-ribosyl)glycinamide (formate route): step 1/1. Functionally, involved in the de novo purine biosynthesis. Catalyzes the transfer of formate to 5-phospho-ribosyl-glycinamide (GAR), producing 5-phospho-ribosyl-N-formylglycinamide (FGAR). Formate is provided by PurU via hydrolysis of 10-formyl-tetrahydrofolate. In Vibrio cholerae serotype O1 (strain M66-2), this protein is Formate-dependent phosphoribosylglycinamide formyltransferase.